The sequence spans 386 residues: Formate-dependent phosphoribosylglycinamide formyltransferase (386 aa).

N(1)-(5-phospho-beta-D-ribosyl)glycinamide is bound by residues 15-16 and Glu75; that span reads EL. Residues Arg107, Lys148, 153-158, 188-191, and Glu196 contribute to the ATP site; these read SSGKGQ and EQFI. The region spanning 112-301 is the ATP-grasp domain; that stretch reads ALAAQQLNLQ…EFELHLRAIV (190 aa). Mg(2+) is bound by residues Glu260 and Glu272. Residues Asp279, Lys349, and 356–357 contribute to the N(1)-(5-phospho-beta-D-ribosyl)glycinamide site; that span reads RR.

Belongs to the PurK/PurT family. In terms of assembly, homodimer.

It catalyses the reaction N(1)-(5-phospho-beta-D-ribosyl)glycinamide + formate + ATP = N(2)-formyl-N(1)-(5-phospho-beta-D-ribosyl)glycinamide + ADP + phosphate + H(+). Its pathway is purine metabolism; IMP biosynthesis via de novo pathway; N(2)-formyl-N(1)-(5-phospho-D-ribosyl)glycinamide from N(1)-(5-phospho-D-ribosyl)glycinamide (formate route): step 1/1. Functionally, involved in the de novo purine biosynthesis. Catalyzes the transfer of formate to 5-phospho-ribosyl-glycinamide (GAR), producing 5-phospho-ribosyl-N-formylglycinamide (FGAR). Formate is provided by PurU via hydrolysis of 10-formyl-tetrahydrofolate. This is Formate-dependent phosphoribosylglycinamide formyltransferase from Francisella tularensis subsp. novicida (strain U112).